The following is a 341-amino-acid chain: S-adenosylmethionine:tRNA ribosyltransferase-isomerase (341 aa).

The protein belongs to the QueA family. As to quaternary structure, monomer.

The protein resides in the cytoplasm. The catalysed reaction is 7-aminomethyl-7-carbaguanosine(34) in tRNA + S-adenosyl-L-methionine = epoxyqueuosine(34) in tRNA + adenine + L-methionine + 2 H(+). Its pathway is tRNA modification; tRNA-queuosine biosynthesis. Transfers and isomerizes the ribose moiety from AdoMet to the 7-aminomethyl group of 7-deazaguanine (preQ1-tRNA) to give epoxyqueuosine (oQ-tRNA). The sequence is that of S-adenosylmethionine:tRNA ribosyltransferase-isomerase from Clostridium botulinum (strain Loch Maree / Type A3).